The following is a 118-amino-acid chain: Large ribosomal subunit protein bL20 (118 aa).

It belongs to the bacterial ribosomal protein bL20 family.

Binds directly to 23S ribosomal RNA and is necessary for the in vitro assembly process of the 50S ribosomal subunit. It is not involved in the protein synthesizing functions of that subunit. The chain is Large ribosomal subunit protein bL20 from Yersinia pseudotuberculosis serotype O:1b (strain IP 31758).